A 125-amino-acid polypeptide reads, in one-letter code: Large ribosomal subunit protein bL12 (125 aa).

Belongs to the bacterial ribosomal protein bL12 family. Homodimer. Part of the ribosomal stalk of the 50S ribosomal subunit. Forms a multimeric L10(L12)X complex, where L10 forms an elongated spine to which 2 to 4 L12 dimers bind in a sequential fashion. Binds GTP-bound translation factors.

In terms of biological role, forms part of the ribosomal stalk which helps the ribosome interact with GTP-bound translation factors. Is thus essential for accurate translation. This Campylobacter jejuni subsp. jejuni serotype O:2 (strain ATCC 700819 / NCTC 11168) protein is Large ribosomal subunit protein bL12.